Reading from the N-terminus, the 604-residue chain is Putative JmjC domain-containing protein L887 (604 aa).

In terms of domain architecture, JmjC spans 1–127 (MNNMKKIIII…PNNKLNLIQP (127 aa)). The chain crosses the membrane as a helical span at residues 4–24 (MKKIIIISIIIIIIIVLLFYI).

Its subcellular location is the membrane. This Acanthamoeba polyphaga (Amoeba) protein is Putative JmjC domain-containing protein L887.